A 271-amino-acid polypeptide reads, in one-letter code: 3-methyl-2-oxobutanoate hydroxymethyltransferase (271 aa).

Positions 51 and 90 each coordinate Mg(2+). 3-methyl-2-oxobutanoate contacts are provided by residues 51-52, aspartate 90, and lysine 118; that span reads DS. Glutamate 120 serves as a coordination point for Mg(2+). Residue glutamate 186 is the Proton acceptor of the active site.

This sequence belongs to the PanB family. As to quaternary structure, homodecamer; pentamer of dimers. Mg(2+) is required as a cofactor.

Its subcellular location is the cytoplasm. It carries out the reaction 3-methyl-2-oxobutanoate + (6R)-5,10-methylene-5,6,7,8-tetrahydrofolate + H2O = 2-dehydropantoate + (6S)-5,6,7,8-tetrahydrofolate. The protein operates within cofactor biosynthesis; (R)-pantothenate biosynthesis; (R)-pantoate from 3-methyl-2-oxobutanoate: step 1/2. Functionally, catalyzes the reversible reaction in which hydroxymethyl group from 5,10-methylenetetrahydrofolate is transferred onto alpha-ketoisovalerate to form ketopantoate. In Xanthomonas oryzae pv. oryzae (strain PXO99A), this protein is 3-methyl-2-oxobutanoate hydroxymethyltransferase.